The sequence spans 261 residues: 1-(5-phosphoribosyl)-5-[(5-phosphoribosylamino)methylideneamino] imidazole-4-carboxamide isomerase (261 aa).

Asp15 (proton acceptor) is an active-site residue. Asp136 serves as the catalytic Proton donor.

It belongs to the HisA/HisF family.

It is found in the cytoplasm. It carries out the reaction 1-(5-phospho-beta-D-ribosyl)-5-[(5-phospho-beta-D-ribosylamino)methylideneamino]imidazole-4-carboxamide = 5-[(5-phospho-1-deoxy-D-ribulos-1-ylimino)methylamino]-1-(5-phospho-beta-D-ribosyl)imidazole-4-carboxamide. It functions in the pathway amino-acid biosynthesis; L-histidine biosynthesis; L-histidine from 5-phospho-alpha-D-ribose 1-diphosphate: step 4/9. The sequence is that of 1-(5-phosphoribosyl)-5-[(5-phosphoribosylamino)methylideneamino] imidazole-4-carboxamide isomerase from Synechococcus sp. (strain JA-2-3B'a(2-13)) (Cyanobacteria bacterium Yellowstone B-Prime).